The following is an 81-amino-acid chain: Large ribosomal subunit protein bL31B (81 aa).

It belongs to the bacterial ribosomal protein bL31 family. Type B subfamily. In terms of assembly, part of the 50S ribosomal subunit.

This chain is Large ribosomal subunit protein bL31B, found in Exiguobacterium sibiricum (strain DSM 17290 / CCUG 55495 / CIP 109462 / JCM 13490 / 255-15).